The chain runs to 211 residues: Lipoprotein signal peptidase (211 aa).

The next 3 helical transmembrane spans lie at 12 to 32 (LLALLFVTLVAIDQWTKYLAV), 96 to 116 (AFRNGFFTLVSLGAVAFILHY), and 127 to 147 (LQVALALVLSGAVGNFLDRLA). Active-site residues include aspartate 153 and aspartate 174. A helical transmembrane segment spans residues 167–187 (WPTFNIADSLIVVGVALLVLH).

Belongs to the peptidase A8 family.

It localises to the cell inner membrane. It catalyses the reaction Release of signal peptides from bacterial membrane prolipoproteins. Hydrolyzes -Xaa-Yaa-Zaa-|-(S,diacylglyceryl)Cys-, in which Xaa is hydrophobic (preferably Leu), and Yaa (Ala or Ser) and Zaa (Gly or Ala) have small, neutral side chains.. It participates in protein modification; lipoprotein biosynthesis (signal peptide cleavage). In terms of biological role, this protein specifically catalyzes the removal of signal peptides from prolipoproteins. This Anaeromyxobacter sp. (strain Fw109-5) protein is Lipoprotein signal peptidase.